The sequence spans 110 residues: UPF0122 protein spr1167 (110 aa).

Belongs to the UPF0122 family.

In terms of biological role, might take part in the signal recognition particle (SRP) pathway. This is inferred from the conservation of its genetic proximity to ftsY/ffh. May be a regulatory protein. In Streptococcus pneumoniae (strain ATCC BAA-255 / R6), this protein is UPF0122 protein spr1167.